Reading from the N-terminus, the 169-residue chain is Large ribosomal subunit protein uL15 (169 aa).

Positions 1–13 (MKLNEIRDNEGAT) are enriched in basic and acidic residues. The disordered stretch occupies residues 1 to 40 (MKLNEIRDNEGATKNRMRVGRGIGSGKGKTGGRGVKGQKA). Residues 21-35 (RGIGSGKGKTGGRGV) show a composition bias toward gly residues.

The protein belongs to the universal ribosomal protein uL15 family. Part of the 50S ribosomal subunit.

Binds to the 23S rRNA. The chain is Large ribosomal subunit protein uL15 from Methylorubrum populi (strain ATCC BAA-705 / NCIMB 13946 / BJ001) (Methylobacterium populi).